A 378-amino-acid chain; its full sequence is Ubiquitin-conjugating enzyme E2 Q2 (378 aa).

The interval 126–152 is disordered; sequence DQPLPTGQNGTTEEVTSEEEEEEEMAE. Over residues 140–152 the composition is skewed to acidic residues; sequence VTSEEEEEEEMAE. The region spanning 207–371 is the UBC core domain; sequence QASDRLMKEL…VQIHEKNGWY (165 aa). Cys307 serves as the catalytic Glycyl thioester intermediate.

It belongs to the ubiquitin-conjugating enzyme family. Auto-ubiquitinated in vitro.

It is found in the cytoplasm. The enzyme catalyses S-ubiquitinyl-[E1 ubiquitin-activating enzyme]-L-cysteine + [E2 ubiquitin-conjugating enzyme]-L-cysteine = [E1 ubiquitin-activating enzyme]-L-cysteine + S-ubiquitinyl-[E2 ubiquitin-conjugating enzyme]-L-cysteine.. Its pathway is protein modification; protein ubiquitination. Functionally, accepts ubiquitin from the E1 complex and catalyzes its covalent attachment to other proteins. In vitro catalyzes 'Lys-48'-linked polyubiquitination. The chain is Ubiquitin-conjugating enzyme E2 Q2 (Ube2q2) from Mus musculus (Mouse).